The chain runs to 482 residues: Cysteine--tRNA ligase (482 aa).

Cys-28 is a binding site for Zn(2+). The 'HIGH' region signature appears at 30 to 40; sequence PTVYNFLHVGN. Cys-208, His-233, and Glu-237 together coordinate Zn(2+). Positions 265 to 269 match the 'KMSKS' region motif; the sequence is KMSKS. Lys-268 serves as a coordination point for ATP.

It belongs to the class-I aminoacyl-tRNA synthetase family. In terms of assembly, monomer. It depends on Zn(2+) as a cofactor.

Its subcellular location is the cytoplasm. The catalysed reaction is tRNA(Cys) + L-cysteine + ATP = L-cysteinyl-tRNA(Cys) + AMP + diphosphate. The polypeptide is Cysteine--tRNA ligase (Bdellovibrio bacteriovorus (strain ATCC 15356 / DSM 50701 / NCIMB 9529 / HD100)).